A 1509-amino-acid chain; its full sequence is MADPQHVQEEAAGAEAVHAHAARHDGAVVMEILSRSLQSMPASPDVSAYFSGASSRRPSAADEVDDEEALRWAALERLPSFDRLRTGLMRADADSSGVGVGAVGRGRRWYAHREVDVRTLELAQRQAFVERVFHVAEEDNERFLKKLRARIDRAGIQMPTVEVRFRNVNVQAECHVGTRALPTLANVSRDVGESLLGLVGLNFAKRKALHILKDVSGIVRPSRMTLLLGPPSSGKTTLLLALAGKLDPTLETSGEVTYNGYGLDEFVPQKTAAYISQHDVHAGEMTVKETLDFSAKCQGVGQRYELLKELAKKERQLGIYPDPEVDLFMKATSVEGSTLQTDYILRILGLDMCADVIVGDELRRGISGGQKKRLTTAEMLVGPTKVLFMDEISTGLDSSTTFQIIRCIQQIVHMGEATVLVSLLQPAPEIFELFDDVMLLSEGQIVYQGPREHVLEFFERCGFRCPERKGVADFLQEVTSKKDQEQYWIQSEKPYRYVSVPEFVAKFKKFHMGKSLKKQLSVPFNKGKIHKSALVFSKQSVSTLELLKTSCSKEWLLMKRNSFVYIFKTVQGILVALIASTVFLRTQLNTRDEDDGQIYIGALIFVMITNMFSGFADLSLTLARLPVFYKHRDFLFYRPWTFALPNVLVRIPSSLFESIIWVAITYYTMGFAPEASRFFKHLLVVFMLQQMAAGLFRVTAGLCRTVVVTNTAGSLAVLIMFVLGGFILPKDAIPKWWVWAYWCSPLTYAYIAFSSNEMHSPRWMDKFVPDGKRLGVAVLENSGVFTNKEWYWIATGALLGFTILFNVLFSLSLMYLNPVGKPQSILPEETDSQENIQEGKNKAHIKQIITVETPEPVSPNSIITLDKVIQQLRGYSANTSDRSHSYINAAGRTAPGRGMVLPFEPLYMSFNEINYYVDMPLEMKSQGVTADKLQLLSGISGAFRPGVLTALMGVSGAGKTTLMDVLSGRKTGGYIEGEIYISGYPKNQATFARISGYCEQNDIHSPQITVRESLLFSAFLRLPKEVNDQEKKIFVDEVMELVELTGLKDAIVGLPGVNGLSTEQRKRLTIAVELVANPSIIFMDEPTSGLDARAAAIVMRTVRNTVNTGRTVVCTIHQPSIDIFEAFDELLLLKRGGQVIYSGPLGTNSHKVVEYFEAIPGVPKIEENRNPATWMLDVSSAASEVRLEIDFAEYYRSSTMHQRTKALVKELSNPPPGSDDLYFPSQYSQSTFNQFKLCLWKQWWTYWRSPDYNLVRIFFALFTALMLGTIFWRVGHKMESSKDLLVIIGSMYAAVLFVGFENSVTVQPVVAVERTVFYRERAAGMYSAIPYALAQVVVEIPYVFVETVIYTLIVYPMMSFQWTPAKFFWFFYVSFFTFLYFTYYGMMNVSVSPNLQVASILGAAFYTLFNLFSGFFIPRPKIPKWWVWYYWLCPVAWTVYGLIVSQYGDVEDFITVPGQSDQQVRPFIKDYFGYDPDFMGVVAAVLAGFTVFFAFTYAYSIRTLNFQQR.

The 272-residue stretch at Leu-196–Glu-467 folds into the ABC transporter 1 domain. Gly-229–Thr-236 is a binding site for ATP. The 214-residue stretch at Glu-545 to Met-758 folds into the ABC transmembrane type-2 1 domain. 7 consecutive transmembrane segments (helical) span residues Phe-563–Phe-583, Ile-598–Leu-618, Ile-651–Phe-671, Leu-682–Leu-702, Val-707–Ile-727, Ile-733–Phe-753, and Tyr-791–Leu-811. Positions Met-908 to Pro-1160 constitute an ABC transporter 2 domain. Residue Gly-953–Thr-960 participates in ATP binding. The ABC transmembrane type-2 2 domain maps to Asn-1233–Tyr-1447. A run of 7 helical transmembrane segments spans residues Tyr-1252 to Trp-1272, Leu-1284 to Val-1304, Val-1336 to Pro-1356, Phe-1367 to Met-1387, Val-1397 to Ile-1417, Trp-1425 to Ser-1445, and Phe-1478 to Ala-1498.

This sequence belongs to the ABC transporter superfamily. ABCG family. PDR (TC 3.A.1.205) subfamily.

The protein localises to the membrane. In terms of biological role, may be a general defense protein. The sequence is that of ABC transporter G family member 38 from Oryza sativa subsp. japonica (Rice).